The chain runs to 295 residues: Polyprenyl transferase dpmaC (295 aa).

8 helical membrane passes run 39 to 59 (LFCV…NDWI), 84 to 104 (QAFV…HVML), 109 to 124 (VHVI…YPFL), 131 to 151 (KLHI…AIPG), 168 to 188 (YCLP…TAYS), 213 to 233 (LVLV…LTQF), 237 to 257 (WLWV…LALF), and 271 to 291 (SNFV…LLKA).

It belongs to the UbiA prenyltransferase family. Mg(2+) serves as cofactor.

The protein resides in the membrane. The protein operates within secondary metabolite biosynthesis; terpenoid biosynthesis. Its function is as follows. Polyprenyl transferase; part of the gene cluster that mediates the biosynthesis of the diterpenoid pyrones subglutinols A and B. The first step of the pathway is the synthesis of the alpha-pyrone moiety by the polyketide synthase dpmaA via condensation of one acetyl-CoA starter unit with 3 malonyl-CoA units and 2 methylations. The alpha-pyrone is then combined with geranylgeranyl pyrophosphate (GGPP) formed by the GGPP synthase dpmaD through the action of the prenyltransferase dpmaC to yield a linear alpha-pyrone diterpenoid. Subsequent steps in the diterpenoid pyrone biosynthetic pathway involve the decalin core formation, which is initiated by the epoxidation of the C10-C11 olefin by the FAD-dependent oxidoreductase dpmaE, and is followed by a cyclization cascade catalyzed by the terpene cyclase dpmaB. The dehydrogenase dpmaF is then involved in tetrahydrofuran (THF) ring formation at the C5 unit to complete the formation of subglutinols A and B. This chain is Polyprenyl transferase dpmaC, found in Metarhizium anisopliae (Entomophthora anisopliae).